The sequence spans 309 residues: Homoserine kinase (309 aa).

91-101 provides a ligand contact to ATP; sequence PIGSGLGSSAC.

This sequence belongs to the GHMP kinase family. Homoserine kinase subfamily.

It is found in the cytoplasm. It catalyses the reaction L-homoserine + ATP = O-phospho-L-homoserine + ADP + H(+). Its pathway is amino-acid biosynthesis; L-threonine biosynthesis; L-threonine from L-aspartate: step 4/5. Its function is as follows. Catalyzes the ATP-dependent phosphorylation of L-homoserine to L-homoserine phosphate. The polypeptide is Homoserine kinase (Pectobacterium carotovorum subsp. carotovorum (strain PC1)).